The chain runs to 431 residues: Serine hydroxymethyltransferase 2 (431 aa).

Residues L131 and 135 to 137 (GHL) each bind (6S)-5,6,7,8-tetrahydrofolate. K240 carries the N6-(pyridoxal phosphate)lysine modification. E256 provides a ligand contact to (6S)-5,6,7,8-tetrahydrofolate.

The protein belongs to the SHMT family. As to quaternary structure, homodimer. It depends on pyridoxal 5'-phosphate as a cofactor.

The protein localises to the cytoplasm. The catalysed reaction is (6R)-5,10-methylene-5,6,7,8-tetrahydrofolate + glycine + H2O = (6S)-5,6,7,8-tetrahydrofolate + L-serine. The protein operates within one-carbon metabolism; tetrahydrofolate interconversion. It participates in amino-acid biosynthesis; glycine biosynthesis; glycine from L-serine: step 1/1. Catalyzes the reversible interconversion of serine and glycine with tetrahydrofolate (THF) serving as the one-carbon carrier. This reaction serves as the major source of one-carbon groups required for the biosynthesis of purines, thymidylate, methionine, and other important biomolecules. Also exhibits THF-independent aldolase activity toward beta-hydroxyamino acids, producing glycine and aldehydes, via a retro-aldol mechanism. This is Serine hydroxymethyltransferase 2 from Vibrio vulnificus (strain CMCP6).